The chain runs to 178 residues: Fucolectin-1 (178 aa).

Positions 1–20 (MKVKTIMLLFQILAISTIKS) are cleaved as a signal peptide. An F5/8 type C-like region spans residues 29 to 178 (QENVAVRGKA…VEVNALLPVN (150 aa)). Residues Asp-59, Asn-61, and Ser-70 each contribute to the Ca(2+) site. 3 disulfide bridges follow: Cys-71-Cys-167, Cys-103-Cys-104, and Cys-129-Cys-145. 2 residues coordinate alpha-L-fucose: His-73 and Arg-100. Positions 100–102 (RGD) match the Cell attachment site motif. Arg-107 is an alpha-L-fucose binding site. The Ca(2+) site is built by Cys-167 and Glu-168.

Belongs to the fucolectin family. In terms of assembly, homotrimer. As to expression, parenchymal hepatocytes.

The protein resides in the secreted. The protein localises to the extracellular space. Its function is as follows. Acts as a defensive agent. Recognizes blood group fucosylated oligosaccharides including A, B, H and Lewis B-type antigens. Does not recognize Lewis A antigen and has low affinity for monovalent haptens. The protein is Fucolectin-1 of Anguilla japonica (Japanese eel).